The following is a 443-amino-acid chain: MDRLGSFSNDPSDKPPCRGCSSYLTEPYIKCAECGPPPFFLCLQCFTRGFEYKKHQSDHTYEIMTSDFPVLDPSWTAQEEMALLEAVMDCGFGNWQDVANQMCTKTKEECEKHYMKHFINNPLFASTLLNLKQAEAAKAADTAIPFHSADDPPRPAFDSLLSRDMAGYMPARADFIEEFDNYAEWDLRDIDFVEDDSDILHALKMAVVDIYHSRLKERQRRKKIIRDHGLVNLRKFRLMERRYPKEVQDLYETMRRFARIVGPVEHDKFIESHALEFELRREIKRLQEYRTAGITNFCSARTYDHLKKTREEERLKRTMLSEVLQYIQDSSACQQWLRRQADIDSGLSPSVLMASNSGRRSAPPLNLTGLPGTEKLNEKEKELCQVVRLVPGAYLEYKSALLNECHKQGGLRLAQARALIKIDVNKTRKIYDFLIREGYITKA.

Ser6 is modified (phosphoserine). The segment at 12-69 adopts a ZZ-type zinc-finger fold; it reads SDKPPCRGCSSYLTEPYIKCAECGPPPFFLCLQCFTRGFEYKKHQSDHTYEIMTSDFP. Cys17, Cys20, Cys31, Cys34, Cys42, Cys45, His55, and His59 together coordinate Zn(2+). The region spanning 70–122 is the SANT domain; that stretch reads VLDPSWTAQEEMALLEAVMDCGFGNWQDVANQMCTKTKEECEKHYMKHFINNP. Residues Lys132 and Lys138 each participate in a glycyl lysine isopeptide (Lys-Gly) (interchain with G-Cter in SUMO2) cross-link. In terms of domain architecture, SWIRM spans 356–443; that stretch reads NSGRRSAPPL…LIREGYITKA (88 aa). The DNA-binding element occupies 426-435; it reads KTRKIYDFLI.

As to quaternary structure, interacts with GCN5. Interacts with NR3C1. Associated with the P/CAF protein in the PCAF complex. Component of the PCAF complex, at least composed of TADA2L/ADA2, TADA3L/ADA3, TAF5L/PAF65-beta, TAF6L/PAF65-alpha, TAF10/TAFII30, TAF12/TAFII20, TAF9/TAFII31 and TRRAP. Component of the ADA2A-containing complex (ATAC), composed of KAT14, KAT2A, TADA2L, TADA3L, ZZ3, MBIP, WDR5, YEATS2, CCDC101 and DR1. Interacts with CCDC134.

It is found in the nucleus. The protein localises to the chromosome. Component of the ATAC complex, a complex with histone acetyltransferase activity on histones H3 and H4. Required for the function of some acidic activation domains, which activate transcription from a distant site. Binds double-stranded DNA. Binds dinucleosomes, probably at the linker region between neighboring nucleosomes. Plays a role in chromatin remodeling. May promote TP53/p53 'Lys-321' acetylation, leading to reduced TP53 stability and transcriptional activity. May also promote XRCC6 acetylation thus facilitating cell apoptosis in response to DNA damage. This is Transcriptional adapter 2-alpha (Tada2a) from Mus musculus (Mouse).